Here is a 729-residue protein sequence, read N- to C-terminus: Polyribonucleotide nucleotidyltransferase (729 aa).

2 residues coordinate Mg(2+): Asp-510 and Asp-516. Residues 576-635 enclose the KH domain; it reads PRVISVKIPVDKIGEVIGPKGKMINQIQADSGAEITVEDDGTIYIGAADGTSAETARSAI. The 73-residue stretch at 647 to 719 folds into the S1 motif domain; the sequence is GERYLGTIVK…ARGKISLSPS (73 aa).

The protein belongs to the polyribonucleotide nucleotidyltransferase family. The cofactor is Mg(2+).

The protein resides in the cytoplasm. The enzyme catalyses RNA(n+1) + phosphate = RNA(n) + a ribonucleoside 5'-diphosphate. Functionally, involved in mRNA degradation. Catalyzes the phosphorolysis of single-stranded polyribonucleotides processively in the 3'- to 5'-direction. The sequence is that of Polyribonucleotide nucleotidyltransferase from Frankia alni (strain DSM 45986 / CECT 9034 / ACN14a).